A 79-amino-acid polypeptide reads, in one-letter code: MPKRILQGVVVSDKMEKTVVVSVERRVMHPIYKKFIRRSKKYHAHDENNVFKTGETIRIRECAPISKTKCWEVIVEPQA.

It belongs to the universal ribosomal protein uS17 family. As to quaternary structure, part of the 30S ribosomal subunit.

Its function is as follows. One of the primary rRNA binding proteins, it binds specifically to the 5'-end of 16S ribosomal RNA. The sequence is that of Small ribosomal subunit protein uS17 from Paramagnetospirillum magneticum (strain ATCC 700264 / AMB-1) (Magnetospirillum magneticum).